The sequence spans 344 residues: Glycerol-3-phosphate dehydrogenase [NAD(P)+] (344 aa).

Residues S23, W24, R44, and K118 each contribute to the NADPH site. 3 residues coordinate sn-glycerol 3-phosphate: K118, G147, and T149. Position 151 (A151) interacts with NADPH. The sn-glycerol 3-phosphate site is built by K202, D255, S265, R266, and N267. K202 acts as the Proton acceptor in catalysis. Residue R266 coordinates NADPH. E292 contacts NADPH.

This sequence belongs to the NAD-dependent glycerol-3-phosphate dehydrogenase family.

The protein localises to the cytoplasm. It carries out the reaction sn-glycerol 3-phosphate + NAD(+) = dihydroxyacetone phosphate + NADH + H(+). The catalysed reaction is sn-glycerol 3-phosphate + NADP(+) = dihydroxyacetone phosphate + NADPH + H(+). Its pathway is membrane lipid metabolism; glycerophospholipid metabolism. Functionally, catalyzes the reduction of the glycolytic intermediate dihydroxyacetone phosphate (DHAP) to sn-glycerol 3-phosphate (G3P), the key precursor for phospholipid synthesis. The polypeptide is Glycerol-3-phosphate dehydrogenase [NAD(P)+] (Nitrosococcus oceani (strain ATCC 19707 / BCRC 17464 / JCM 30415 / NCIMB 11848 / C-107)).